Consider the following 175-residue polypeptide: MKNLHALMPACLLLTASAMAAPSNIGSAGDIHFTITIKAATCELENDSIDVNMETVVLQRPVKVGKELNQKNFSIGLKDCAYATKASVTMDGSPDPTDPSLFALDSGGATGVALKIKTSGGEQQYPSSTDSTPVEHTVWFDGTNKLNYIASYVPVKPDATVGTANATVNFSVTYE.

A signal peptide spans 1–20 (MKNLHALMPACLLLTASAMA).

Belongs to the fimbrial protein family.

The protein localises to the fimbrium. This chain is Protein LpfE (lpfE), found in Salmonella typhimurium (strain LT2 / SGSC1412 / ATCC 700720).